The chain runs to 341 residues: Thromboxane A2 receptor (341 aa).

Over 1–29 (MWPNGTSLGACFRPVNITLQERRAIASPW) the chain is Extracellular. 2 N-linked (GlcNAc...) asparagine glycosylation sites follow: N4 and N16. Residues 30–52 (FAASFCALGLGSNLLALSVLAGA) traverse the membrane as a helical segment. At 53 to 65 (RPGAGPRSSFLAL) the chain is on the cytoplasmic side. The helical transmembrane segment at 66 to 86 (LCGLVLTDFLGLLVTGAIVAS) threads the bilayer. The Extracellular segment spans residues 87–105 (QHAALLDWRATDPSCRLCY). C104 and C181 are oxidised to a cystine. A helical membrane pass occupies residues 106–127 (FMGVAMVFFGLCPLLLGAAMAS). The Cytoplasmic segment spans residues 128 to 147 (ERFVGITRPFSRPTATSRRA). A helical transmembrane segment spans residues 148–170 (WATVGLVWVAAGALGLLPLLGLG). Residues 171–191 (RYSVQYPGSWCFLTLGTQRGD) are Extracellular-facing. The helical transmembrane segment at 192–217 (VVFGLIFALLGSASVGLSLLLNTVSV) threads the bilayer. Residues 218–244 (ATLCRVYHTREATQRPRDCEVEMMVQL) are Cytoplasmic-facing. A helical membrane pass occupies residues 245-268 (VGIMVVATVCWMPLLVFIMQTLLQ). Residues 269–287 (TPPVMSFSGQLLRATEHQL) are Extracellular-facing. A helical transmembrane segment spans residues 288–309 (LIYLRVATWNQILDPWVYILFR). The Cytoplasmic segment spans residues 310–341 (RSVLRRLHPRFSSQLQAVSLRRPPAQAMLSGP). Phosphoserine is present on S328.

It belongs to the G-protein coupled receptor 1 family. In terms of assembly, interacts with RPGRIP1L. Interacts with RACK1; the interaction regulates TBXA2R cell surface expression.

Its subcellular location is the cell membrane. Functionally, receptor for thromboxane A2 (TXA2), a potent stimulator of platelet aggregation. The activity of this receptor is mediated by a G-protein that activates a phosphatidylinositol-calcium second messenger system. In the kidney, the binding of TXA2 to glomerular TP receptors causes intense vasoconstriction. Activates phospholipase C and adenylyl cyclase. This is Thromboxane A2 receptor (Tbxa2r) from Mus musculus (Mouse).